The chain runs to 1086 residues: Calcium-transporting ATPase 9, plasma membrane-type (1086 aa).

Residues 1-15 (MSTSSSNGLLLTSMS) show a composition bias toward low complexity. The segment at 1–50 (MSTSSSNGLLLTSMSGRHDDMEAGSAKTEEHSDHEELQHDPDDPFDIDNT) is disordered. Residues 1 to 194 (MSTSSSNGLL…NTYPKKKGKN (194 aa)) lie on the Cytoplasmic side of the membrane. The segment covering 16 to 42 (GRHDDMEAGSAKTEEHSDHEELQHDPD) has biased composition (basic and acidic residues). The interaction with calmodulin stretch occupies residues 57–68 (SLRRWRQAALVL). Residues 195-215 (FFMFLWEAWQDLTLIILIIAA) form a helical membrane-spanning segment. At 216–233 (VTSLALGIKTEGLKEGWL) the chain is on the lumenal side. A helical transmembrane segment spans residues 234-254 (DGGSIAFAVLLVIVVTAVSDY). The Cytoplasmic segment spans residues 255–382 (RQSLQFQNLN…GEETPLQVRL (128 aa)). The chain crosses the membrane as a helical span at residues 383–402 (NGLATFIGIVGLSVALVVLV). The Lumenal segment spans residues 403–439 (ALLVRYFTGTTQDTNGATQFIKGTTSISDIVDDCVKI). The helical transmembrane segment at 440–457 (FTIAVTIVVVAVPEGLPL) threads the bilayer. Residues 458 to 857 (AVTLTLAYSM…RWGRSVYANI (400 aa)) lie on the Cytoplasmic side of the membrane. Asp495 (4-aspartylphosphate intermediate) is an active-site residue. Residues Asp802 and Asp806 each coordinate Mg(2+). A helical membrane pass occupies residues 858–876 (QKFIQFQLTVNVAALIINV). Over 877–887 (VAAMSSGDVPL) the chain is Lumenal. Residues 888-908 (KAVQLLWVNLIMDTLGALALA) traverse the membrane as a helical segment. At 909–928 (TEPPTDHLMHRTPVGRREPL) the chain is on the cytoplasmic side. The helical transmembrane segment at 929–951 (ITNIMWRNLLVQSFYQVAVLLVL) threads the bilayer. Residues 952 to 963 (NFAGLSILGLNH) lie on the Lumenal side of the membrane. A helical transmembrane segment spans residues 964–988 (ENHAHAVEVKNTMIFNAFVMCQIFN). Residues 989 to 1006 (EFNARKPDEMNVFRGVNK) lie on the Cytoplasmic side of the membrane. Residues 1007–1028 (NPLFVAIVGVTFILQIIIVTFL) traverse the membrane as a helical segment. Residues 1029–1038 (GKFAHTVRLG) are Lumenal-facing. Residues 1039–1060 (WQLWLASIIIGLVSWPLAIVGK) form a helical membrane-spanning segment. Topologically, residues 1061–1086 (LIPVPKTPMSVYFKKPFRKYKASRNA) are cytoplasmic.

This sequence belongs to the cation transport ATPase (P-type) (TC 3.A.3) family. Type IIB subfamily.

It localises to the membrane. The enzyme catalyses Ca(2+)(in) + ATP + H2O = Ca(2+)(out) + ADP + phosphate + H(+). Activated by calmodulin. Its function is as follows. This magnesium-dependent enzyme catalyzes the hydrolysis of ATP coupled with the translocation of calcium from the cytosol out of the cell or into organelles. The protein is Calcium-transporting ATPase 9, plasma membrane-type (ACA9) of Arabidopsis thaliana (Mouse-ear cress).